A 178-amino-acid polypeptide reads, in one-letter code: Conodipine-P1 (178 aa).

A signal peptide spans 1–24 (MKLLAPVLWAMAALGVTWLVAVDS). A 4-hydroxyproline; partial mark is found at proline 38, proline 42, and proline 49. Histidine 54 is an active-site residue. Residues 98–130 (KREVTSHRATSIAHSRLWKTALDQKSFLNRKAR) constitute a propeptide, interchain peptide. Glutamine 131 is modified (pyrrolidone carboxylic acid). Proline 137 carries the post-translational modification 4-hydroxyproline; partial.

It belongs to the phospholipase A2 family. Group IX subfamily. Heterodimer of an alpha and a beta chain; probably disulfide-linked. Ca(2+) is required as a cofactor. As to expression, expressed by the venom duct.

It is found in the secreted. It catalyses the reaction a 1,2-diacyl-sn-glycero-3-phosphocholine + H2O = a 1-acyl-sn-glycero-3-phosphocholine + a fatty acid + H(+). Functionally, catalyzes the calcium-dependent hydrolysis of the 2-acyl groups in 3-sn-phosphoglycerides. The sequence is that of Conodipine-P1 from Conus purpurascens (Purple cone).